Consider the following 255-residue polypeptide: tRNA (guanine-N(7)-)-methyltransferase (255 aa).

The segment at 1–31 (MMHDDPNEAGLPPHNDAIPDETAEGADEVNP) is disordered. Residues 18 to 27 (IPDETAEGAD) are compositionally biased toward acidic residues. 4 residues coordinate S-adenosyl-L-methionine: Glu86, Glu111, Asp138, and Asp161. Asp161 is an active-site residue. Substrate-binding positions include Lys165, Asp197, and 232–235 (TKFE).

Belongs to the class I-like SAM-binding methyltransferase superfamily. TrmB family.

The catalysed reaction is guanosine(46) in tRNA + S-adenosyl-L-methionine = N(7)-methylguanosine(46) in tRNA + S-adenosyl-L-homocysteine. It participates in tRNA modification; N(7)-methylguanine-tRNA biosynthesis. Its function is as follows. Catalyzes the formation of N(7)-methylguanine at position 46 (m7G46) in tRNA. The polypeptide is tRNA (guanine-N(7)-)-methyltransferase (Burkholderia cenocepacia (strain HI2424)).